Consider the following 115-residue polypeptide: Large ribosomal subunit protein uL22 (115 aa).

It belongs to the universal ribosomal protein uL22 family. In terms of assembly, part of the 50S ribosomal subunit.

In terms of biological role, this protein binds specifically to 23S rRNA; its binding is stimulated by other ribosomal proteins, e.g. L4, L17, and L20. It is important during the early stages of 50S assembly. It makes multiple contacts with different domains of the 23S rRNA in the assembled 50S subunit and ribosome. Its function is as follows. The globular domain of the protein is located near the polypeptide exit tunnel on the outside of the subunit, while an extended beta-hairpin is found that lines the wall of the exit tunnel in the center of the 70S ribosome. The protein is Large ribosomal subunit protein uL22 of Lactococcus lactis subsp. lactis (strain IL1403) (Streptococcus lactis).